The following is a 155-amino-acid chain: uncharacterized protein (155 aa).

This sequence belongs to the mimivirus L6/L7/L57 family.

This is an uncharacterized protein from Acanthamoeba polyphaga (Amoeba).